We begin with the raw amino-acid sequence, 199 residues long: Recombination protein RecR (199 aa).

A C4-type zinc finger spans residues 57 to 72 (CRQCRVLTEEPVCGLC). The region spanning 80-175 (SLLCVVEGPA…RTTRIAHGVP (96 aa)) is the Toprim domain.

The protein belongs to the RecR family.

In terms of biological role, may play a role in DNA repair. It seems to be involved in an RecBC-independent recombinational process of DNA repair. It may act with RecF and RecO. The protein is Recombination protein RecR of Alkalilimnicola ehrlichii (strain ATCC BAA-1101 / DSM 17681 / MLHE-1).